The chain runs to 313 residues: Dehydrogenase/reductase SDR family member 1 (313 aa).

Position 19 (Ile-19) interacts with NAD(+). Arg-21 bears the Omega-N-methylarginine mark. NAD(+) is bound at residue Asp-64. Ser-151 is a binding site for substrate. Residues Tyr-163, Lys-167, and Thr-198 each contribute to the NAD(+) site. Residue Tyr-163 is the Proton acceptor of the active site.

It belongs to the short-chain dehydrogenases/reductases (SDR) family.

The protein resides in the endoplasmic reticulum. The enzyme catalyses 17alpha-estradiol + NADP(+) = estrone + NADPH + H(+). It carries out the reaction testosterone + NADP(+) = androst-4-ene-3,17-dione + NADPH + H(+). The catalysed reaction is prostaglandin E1 + NADPH + H(+) = prostaglandin F1 + NADP(+). It catalyses the reaction isatin + NADPH + H(+) = 3-hydroxyindolin-2-one + NADP(+). Functionally, NADPH-dependent oxidoreductase which catalyzes the reduction of some steroids (estrone, androstene-3,17-dione and cortisone) as well as prostaglandin E1, isatin and xenobiotics in vitro. May have a role in steroid and/or xenobiotic metabolism. The protein is Dehydrogenase/reductase SDR family member 1 of Mus musculus (Mouse).